Reading from the N-terminus, the 496-residue chain is Mothers against decapentaplegic homolog 6 (496 aa).

Positions 1-15 are enriched in basic residues; the sequence is MFRSKRSGLVRRLWR. Disordered stretches follow at residues 1-116 and 136-156; these read MFRS…PGWL and GAPRDASDPLAGAALEPAGGG. 2 positions are modified to dimethylated arginine; alternate: R75 and R82. An omega-N-methylarginine; alternate mark is found at R75 and R82. The region spanning 148–275 is the MH1 domain; sequence AALEPAGGGR…FSRLCGPESP (128 aa). Residue K173 forms a Glycyl lysine isopeptide (Lys-Gly) (interchain with G-Cter in ubiquitin) linkage. C205, C247, C260, and H265 together coordinate Zn(2+). The MH2 domain occupies 331–496; it reads WCSVAYWEHR…WLEILLNNPR (166 aa). Position 435 is a phosphoserine; by PRKX; in vitro (S435).

The protein belongs to the dwarfin/SMAD family. As to quaternary structure, interacts with NEDD4L. Interacts with WWP1. Interacts with STAMBP and PRKX. Interacts with RNF111 and AXIN1. Interacts with TGF-beta type I receptor superfamily members, including ACVR1B, BMPR1B and TGFBR1. In response to BMP2, but not to TGFB treatment, interacts with SMAD1, but not with SMAD2, nor with SMAD4; this interaction may inhibit SMAD1 binding to SMAD4. Interacts with HOXC8 and HOXC9. Interacts with PELI1; this interaction interferes with PELI1 complex formation with TRAF6, IRAK1, IRAK4 and MYD88 in response to IL1B and hence negatively regulates IL1R-TLR signaling. Interacts with TSC22D1/TSC-22. Phosphorylated by BMP type 1 receptor kinase and by PRKX. Post-translationally, monoubiquitinated at Lys-173 by the E2/E3 hybrid ubiquitin-protein ligase UBE2O, leading to reduced binding affinity for the activated BMP type I receptor ACVR1/ALK2, thereby enhancing BMP7 and regulating adipocyte differentiation. Ubiquitinated by WWP1. Ubiquitinated by ARK2C, promoting proteasomal degradation, leading to enhance the BMP-Smad signaling. In terms of processing, arginine methylation by PRMT1, which is recruited by BMPR2, initiates BMP-Induced signaling and induces dissociation from the BMPR1B receptor at the cell surface leading to derepress downstream Smad1/Smad5 signaling. In terms of tissue distribution, expressed in the brain, heart, ovary, peripheral blood leukocytes, small intestine, spleen, thymus, bone marrow, fetal liver and lymph nodes.

Its subcellular location is the nucleus. Transforming growth factor-beta superfamily receptors signaling occurs through the Smad family of intracellular mediators. SMAD6 is an inhibitory Smad (i-Smad) that negatively regulates signaling downstream of type I transforming growth factor-beta. Acts as a mediator of TGF-beta and BMP anti-inflammatory activities. Suppresses IL1R-TLR signaling through its direct interaction with PEL1, preventing NF-kappa-B activation, nuclear transport and NF-kappa-B-mediated expression of pro-inflammatory genes. Blocks the BMP-SMAD1 signaling pathway by competing with SMAD4 for receptor-activated SMAD1-binding. Binds to regulatory elements in target promoter regions. The chain is Mothers against decapentaplegic homolog 6 (SMAD6) from Homo sapiens (Human).